A 418-amino-acid chain; its full sequence is MEIRDVETVNRINLHSHIAGLGCDGDEVEYDKDGLVGQIKARKAMAVIRKMVESNKGGKVVLIKGDRGSGKTALAIGLSKSLGGVHFNSISGTEIYSLEMSKSEAITQALRKSVGLRIKESVKVIEGEVVSLSGRRIVLKTVDMESSFEIGEKMRGELDKEKVSAGDVIRIVRERGRVYKIGTSMVKRSDVVGTDTRFVPCPEGELIRITEETQEISLHDIDVVNSKAEGYLALFSGETGEIRAETRDEVNKKVWGWINEGKAEIVRGVLFIDEVHMLDIESFAFLNKAVEEDFCPVILVSTNKGECIVRGTDEPSPYGIPRDFIDRALIISMEKHCRRDLEAILRHRILEEDILIDDDAVDRLVSISEASGLRYSMNLLTISSMRASRRNGRVALGDVERAFELFLDEARGTESFNG.

65–72 contributes to the ATP binding site; it reads GDRGSGKT.

It belongs to the RuvB family. As to quaternary structure, component of the SWR1 chromatin remodeling complex, the INO80 chromatin remodeling complex, and of the R2TP complex.

The protein localises to the nucleus. It catalyses the reaction ATP + H2O = ADP + phosphate + H(+). Functionally, DNA helicase which participates in several chromatin remodeling complexes, including the SWR1 and the INO80 complexes. The SWR1 complex mediates the ATP-dependent exchange of histone H2A for the H2A variant HZT1 leading to transcriptional regulation of selected genes by chromatin remodeling. The INO80 complex remodels chromatin by shifting nucleosomes and is involved in DNA repair. Also involved in pre-rRNA processing. This Encephalitozoon cuniculi (strain GB-M1) (Microsporidian parasite) protein is RuvB-like helicase 2 (RVB2).